The chain runs to 321 residues: Sideroflexin-3 (321 aa).

Met1 is subject to N-acetylmethionine. 4 helical membrane-spanning segments follow: residues 146 to 164 (LGTAYVSATTGAVATALGL), 174 to 194 (LVGRFVPFAAVAAANCINIPL), 225 to 245 (IFQVVISRIGMAIPAMAIPPV), and 266 to 286 (LQVGLVGFCLVFATPLCCALF).

This sequence belongs to the sideroflexin family. Widely expressed.

The protein localises to the mitochondrion membrane. It catalyses the reaction L-serine(in) = L-serine(out). Functionally, mitochondrial serine transporter that mediates transport of serine into mitochondria, an important step of the one-carbon metabolism pathway. Mitochondrial serine is converted to glycine and formate, which then exits to the cytosol where it is used to generate the charged folates that serve as one-carbon donors. The polypeptide is Sideroflexin-3 (Mus musculus (Mouse)).